The sequence spans 448 residues: Glutamyl-tRNA reductase (448 aa).

Residues 49 to 52 (TCNR), S109, 114 to 116 (ETQ), and Q120 contribute to the substrate site. Catalysis depends on C50, which acts as the Nucleophile. Residue 189–194 (GAGEMG) coordinates NADP(+).

This sequence belongs to the glutamyl-tRNA reductase family. Homodimer.

The enzyme catalyses (S)-4-amino-5-oxopentanoate + tRNA(Glu) + NADP(+) = L-glutamyl-tRNA(Glu) + NADPH + H(+). It functions in the pathway porphyrin-containing compound metabolism; protoporphyrin-IX biosynthesis; 5-aminolevulinate from L-glutamyl-tRNA(Glu): step 1/2. Its function is as follows. Catalyzes the NADPH-dependent reduction of glutamyl-tRNA(Glu) to glutamate 1-semialdehyde (GSA). The sequence is that of Glutamyl-tRNA reductase from Staphylococcus epidermidis (strain ATCC 12228 / FDA PCI 1200).